A 1318-amino-acid polypeptide reads, in one-letter code: DNA-directed RNA polymerase subunit beta' (1318 aa).

Zn(2+) contacts are provided by C60, C62, C75, and C78. 3 residues coordinate Mg(2+): D535, D537, and D539. Zn(2+) is bound by residues C890, C967, C974, and C977.

This sequence belongs to the RNA polymerase beta' chain family. In terms of assembly, the RNAP catalytic core consists of 2 alpha, 1 beta, 1 beta' and 1 omega subunit. When a sigma factor is associated with the core the holoenzyme is formed, which can initiate transcription. It depends on Mg(2+) as a cofactor. Zn(2+) serves as cofactor.

It catalyses the reaction RNA(n) + a ribonucleoside 5'-triphosphate = RNA(n+1) + diphosphate. DNA-dependent RNA polymerase catalyzes the transcription of DNA into RNA using the four ribonucleoside triphosphates as substrates. The chain is DNA-directed RNA polymerase subunit beta' from Rhodococcus jostii (strain RHA1).